The following is a 161-amino-acid chain: Epididymal protein 13 (161 aa).

An N-terminal signal peptide occupies residues 1-23 (MHRSEPFLKMSLLILLFLGLAEA). N-linked (GlcNAc...) asparagine glycosylation occurs at N56.

It localises to the secreted. The protein is Epididymal protein 13 of Homo sapiens (Human).